The chain runs to 436 residues: Adenylosuccinate synthetase (436 aa).

GTP-binding positions include 12 to 18 (GDEGKGK) and 40 to 42 (GHT). Catalysis depends on Asp13, which acts as the Proton acceptor. The Mg(2+) site is built by Asp13 and Gly40. IMP is bound by residues 13 to 16 (DEGK), 38 to 41 (NAGH), Thr130, Arg144, Gln230, Thr245, and Arg309. The Proton donor role is filled by His41. 305–311 (TTTGRPR) lines the substrate pocket. Residues Arg311, 337 to 339 (KLD), and 419 to 421 (SVG) contribute to the GTP site.

The protein belongs to the adenylosuccinate synthetase family. Homodimer. The cofactor is Mg(2+).

The protein resides in the cytoplasm. It carries out the reaction IMP + L-aspartate + GTP = N(6)-(1,2-dicarboxyethyl)-AMP + GDP + phosphate + 2 H(+). The protein operates within purine metabolism; AMP biosynthesis via de novo pathway; AMP from IMP: step 1/2. In terms of biological role, plays an important role in the de novo pathway of purine nucleotide biosynthesis. Catalyzes the first committed step in the biosynthesis of AMP from IMP. This chain is Adenylosuccinate synthetase, found in Myxococcus xanthus (strain DK1622).